Here is a 470-residue protein sequence, read N- to C-terminus: ATP synthase subunit beta (470 aa).

158-165 (GGAGVGKT) contributes to the ATP binding site.

The protein belongs to the ATPase alpha/beta chains family. F-type ATPases have 2 components, CF(1) - the catalytic core - and CF(0) - the membrane proton channel. CF(1) has five subunits: alpha(3), beta(3), gamma(1), delta(1), epsilon(1). CF(0) has three main subunits: a(1), b(2) and c(9-12). The alpha and beta chains form an alternating ring which encloses part of the gamma chain. CF(1) is attached to CF(0) by a central stalk formed by the gamma and epsilon chains, while a peripheral stalk is formed by the delta and b chains.

Its subcellular location is the cell membrane. The enzyme catalyses ATP + H2O + 4 H(+)(in) = ADP + phosphate + 5 H(+)(out). Functionally, produces ATP from ADP in the presence of a proton gradient across the membrane. The catalytic sites are hosted primarily by the beta subunits. This is ATP synthase subunit beta from Halalkalibacterium halodurans (strain ATCC BAA-125 / DSM 18197 / FERM 7344 / JCM 9153 / C-125) (Bacillus halodurans).